The chain runs to 874 residues: Alanine--tRNA ligase (874 aa).

Positions 564, 568, 665, and 669 each coordinate Zn(2+).

This sequence belongs to the class-II aminoacyl-tRNA synthetase family. The cofactor is Zn(2+).

It is found in the cytoplasm. It catalyses the reaction tRNA(Ala) + L-alanine + ATP = L-alanyl-tRNA(Ala) + AMP + diphosphate. Its function is as follows. Catalyzes the attachment of alanine to tRNA(Ala) in a two-step reaction: alanine is first activated by ATP to form Ala-AMP and then transferred to the acceptor end of tRNA(Ala). Also edits incorrectly charged Ser-tRNA(Ala) and Gly-tRNA(Ala) via its editing domain. The sequence is that of Alanine--tRNA ligase from Cupriavidus metallidurans (strain ATCC 43123 / DSM 2839 / NBRC 102507 / CH34) (Ralstonia metallidurans).